The chain runs to 160 residues: MESEGKIVFTEEQEALVVKSWSVMKKNSAELGLKLFIKIFEIAPTTKKMFSFLRDSPIPAEQNPKLKPHAMSVFVMCCESAVQLRKTGKVTVRETTLKRLGASHSKYGVVDEHFEVAKYALLETIKEAVPEMWSPEMKVAWGQAYDHLVAAIKAEMNLSN.

The Globin domain maps to 8–157 (VFTEEQEALV…LVAAIKAEMN (150 aa)). The Homodimerization signature appears at 41-45 (EIAPT). Heme b-binding residues include serine 51, lysine 65, histidine 69, arginine 99, serine 103, and histidine 104. The Homodimerization signature appears at 111 to 123 (DEHFEVAKYALLE).

The protein belongs to the plant globin family. Homodimer. It depends on heme b as a cofactor. As to expression, expressed in roots and rosette leaves.

Its subcellular location is the cytoplasm. It is found in the nucleus. The enzyme catalyses Fe(III)-heme b-[protein] + nitric oxide + H2O = Fe(II)-heme b-[protein] + nitrite + 2 H(+). Phytoglobin that reduces nitrite to nitric oxide (NO) under anoxic conditions (e.g. during flooding or in waterlogged soil). May not function as an oxygen storage or transport protein. Has an unusually high affinity for O(2) through an hexacoordinate heme iron because of a very low dissociation constant. This Arabidopsis thaliana (Mouse-ear cress) protein is Anaerobic nitrite reductase AHB1.